The following is a 599-amino-acid chain: Potassium-transporting ATPase potassium-binding subunit (599 aa).

Transmembrane regions (helical) follow at residues 8-28 (LLAL…IWLA), 61-81 (WQYA…VYAL), 133-153 (ALAV…FALF), 176-196 (AWLL…NGVI), 280-300 (LTNF…CFAF), 311-331 (WAVL…ITPA), 366-386 (INAS…AVIA), 391-411 (FTPL…VVFG), 416-436 (GLYG…LMIG), 456-476 (IAIL…VLAG), 521-541 (LLGL…LAIA), and 563-583 (LFVL…YVPA).

This sequence belongs to the KdpA family. As to quaternary structure, the system is composed of three essential subunits: KdpA, KdpB and KdpC.

It localises to the cell inner membrane. Its function is as follows. Part of the high-affinity ATP-driven potassium transport (or Kdp) system, which catalyzes the hydrolysis of ATP coupled with the electrogenic transport of potassium into the cytoplasm. This subunit binds the periplasmic potassium ions and delivers the ions to the membrane domain of KdpB through an intramembrane tunnel. In Polaromonas naphthalenivorans (strain CJ2), this protein is Potassium-transporting ATPase potassium-binding subunit.